Here is a 347-residue protein sequence, read N- to C-terminus: NADH-ubiquinone oxidoreductase chain 2 (347 aa).

The next 11 membrane-spanning stretches (helical) occupy residues 3–23, 25–45, 59–79, 96–116, 122–142, 145–165, 178–198, 202–222, 240–260, 276–296, and 326–346; these read PLIFPIIMLTIMLGTLIVMIS, HWLMIWMGFEMNMLAVIPVLM, YFLTQATASMLLMLAIVINLL, IIMTLALTMKLGLAPFHFWVP, VSLTSGLVLLTWQKLAPLSVL, IAPVINSDLILTMSILSIMIG, ILAYSSIAHMGWMTSVLIFNP, LLNLLLYILMTSTTFALFMTV, ITTSILIMMLSLGGLPPLTGF, IILATLMAIAALLSLFFYMRL, and LSPLIILSTLTLPLAPAMMIL.

This sequence belongs to the complex I subunit 2 family. Core subunit of respiratory chain NADH dehydrogenase (Complex I) which is composed of 45 different subunits. Interacts with TMEM242.

The protein localises to the mitochondrion inner membrane. The catalysed reaction is a ubiquinone + NADH + 5 H(+)(in) = a ubiquinol + NAD(+) + 4 H(+)(out). Its function is as follows. Core subunit of the mitochondrial membrane respiratory chain NADH dehydrogenase (Complex I) which catalyzes electron transfer from NADH through the respiratory chain, using ubiquinone as an electron acceptor. Essential for the catalytic activity and assembly of complex I. In Peropteryx macrotis (Lesser dog-like bat), this protein is NADH-ubiquinone oxidoreductase chain 2.